The following is a 372-amino-acid chain: Delta-type opioid receptor (372 aa).

Over 1–47 the chain is Extracellular; that stretch reads MELVPSARAELQSSPLVNLSDAFPSAFPSAGANASGSPGARSASSLA. Residues Asn18 and Asn33 are each glycosylated (N-linked (GlcNAc...) asparagine). A helical membrane pass occupies residues 48-75; it reads LAIAITALYSAVCAVGLLGNVLVMFGIV. Residues 76–85 lie on the Cytoplasmic side of the membrane; the sequence is RYTKLKTATN. The helical transmembrane segment at 86–110 threads the bilayer; it reads IYIFNLALADALATSTLPFQSAKYL. Residues 111–122 lie on the Extracellular side of the membrane; it reads METWPFGELLCK. An intrachain disulfide couples Cys121 to Cys198. The chain crosses the membrane as a helical span at residues 123-144; the sequence is AVLSIDYYNMFTSIFTLTMMSV. Topologically, residues 145 to 163 are cytoplasmic; sequence DRYIAVCHPVKALDFRTPA. Residues 164–186 traverse the membrane as a helical segment; it reads KAKLINICIWVLASGVGVPIMVM. At 187 to 206 the chain is on the extracellular side; the sequence is AVTQPRDGAVVCMLQFPSPS. A helical transmembrane segment spans residues 207–238; sequence WYWDTVTKICVFLFAFVVPILIITVCYGLMLL. Topologically, residues 239-261 are cytoplasmic; sequence RLRSVRLLSGSKEKDRSLRRITR. Residues 262 to 284 traverse the membrane as a helical segment; the sequence is MVLVVVGAFVVCWAPIHIFVIVW. Residues 285-299 lie on the Extracellular side of the membrane; the sequence is TLVDINRRDPLVVAA. A helical membrane pass occupies residues 300-321; the sequence is LHLCIALGYANSSLNPVLYAFL. The Cytoplasmic portion of the chain corresponds to 322–372; sequence DENFKRCFRQLCRTPCGRQEPGSLRRPRQATTRERVTACTPSDGPGGGAAA. A lipid anchor (S-palmitoyl cysteine) is attached at Cys333. Positions 340 to 372 are disordered; it reads QEPGSLRRPRQATTRERVTACTPSDGPGGGAAA.

The protein belongs to the G-protein coupled receptor 1 family. As to quaternary structure, may form homooligomers. Forms a heterodimer with OPRM1. Interacts with GPRASP1. Interacts with RTP4; the interaction promotes cell surface localization of the OPRD1-OPRM1 heterodimer. Post-translationally, ubiquitinated. A basal ubiquitination seems not to be related to degradation. Ubiquitination is increased upon formation of OPRM1:OPRD1 oligomers leading to proteasomal degradation; the ubiquitination is diminished by RTP4. Brain, with high concentrations in the basal ganglia and limbic regions.

The protein resides in the cell membrane. G-protein coupled receptor that functions as a receptor for endogenous enkephalins and for a subset of other opioids. Ligand binding causes a conformation change that triggers signaling via guanine nucleotide-binding proteins (G proteins) and modulates the activity of down-stream effectors, such as adenylate cyclase. Signaling leads to the inhibition of adenylate cyclase activity. Inhibits neurotransmitter release by reducing calcium ion currents and increasing potassium ion conductance. Plays a role in the perception of pain and in opiate-mediated analgesia. Plays a role in developing analgesic tolerance to morphine. This chain is Delta-type opioid receptor (Oprd1), found in Mus musculus (Mouse).